The sequence spans 141 residues: Large ribosomal subunit protein uL16 (141 aa).

A disordered region spans residues 1 to 23 (MLMPKRTKYRKQMKGRNRGKAHR).

Belongs to the universal ribosomal protein uL16 family. As to quaternary structure, part of the 50S ribosomal subunit.

Binds 23S rRNA and is also seen to make contacts with the A and possibly P site tRNAs. In Helicobacter pylori (strain J99 / ATCC 700824) (Campylobacter pylori J99), this protein is Large ribosomal subunit protein uL16.